We begin with the raw amino-acid sequence, 351 residues long: MSDPVFIAPKGGLTLGSVAEACGVPLPDGADPAQPVTGAAPLETAGPSELAYMDNARYGDALATTRALACLVSPRFAPRVPAGTIALVTRDPYRAYAGLLARLYEEAMRPGSLFAAAGVSPGAHVHPQARLEDGMRIDPGAVVGPGAEIGSGTVLGPNAVIGPNVRIGRDCSIGAGATLTHALVGNRVIVHPGARIGQDGFGFAMGAGGHIKVPQVGRVIIQDDVEIGANTTIDRGASRDTVVGEGTKIDNLVQIAHNVVIGRHCVIVSGVGISGSTTLEDYVVLGGQVGVVGHLRIGMGSQIAGSSNVNRDVPPGSRWGGTPAKPVRTWFREMTTLARLAERGGKDEAEG.

The Proton acceptor role is filled by His257.

It belongs to the transferase hexapeptide repeat family. LpxD subfamily. As to quaternary structure, homotrimer.

It carries out the reaction a UDP-3-O-[(3R)-3-hydroxyacyl]-alpha-D-glucosamine + a (3R)-hydroxyacyl-[ACP] = a UDP-2-N,3-O-bis[(3R)-3-hydroxyacyl]-alpha-D-glucosamine + holo-[ACP] + H(+). It functions in the pathway bacterial outer membrane biogenesis; LPS lipid A biosynthesis. Its function is as follows. Catalyzes the N-acylation of UDP-3-O-acylglucosamine using 3-hydroxyacyl-ACP as the acyl donor. Is involved in the biosynthesis of lipid A, a phosphorylated glycolipid that anchors the lipopolysaccharide to the outer membrane of the cell. This chain is UDP-3-O-acylglucosamine N-acyltransferase, found in Methylorubrum extorquens (strain PA1) (Methylobacterium extorquens).